The sequence spans 776 residues: ADP-ribosylation factor GTPase-activating protein AGD2 (776 aa).

The BAR domain occupies 2–226 (AGFINLEDSP…IHQVLTYAQQ (225 aa)). A disordered region spans residues 248–267 (QSELDSQQASAKADPSDVGG). A PH domain is found at 290 to 421 (EVTKQGYLLK…WVNKITAAIT (132 aa)). One can recognise an Arf-GAP domain in the interval 467–604 (DDVLTILREI…ALVVKDEREA (138 aa)). The segment at 482–505 (CAECNAPDPDWASLNLGVLMCIEC) adopts a C4-type zinc-finger fold. 2 ANK repeats span residues 683–712 (QGCS…DINM) and 716–745 (HGRT…RPSI).

As to expression, expressed in roots, hypocotyls, cotyledons, leaf and shoot apical meristems and siliques.

Probable GTPase-activating protein. This chain is ADP-ribosylation factor GTPase-activating protein AGD2 (AGD2), found in Arabidopsis thaliana (Mouse-ear cress).